Consider the following 146-residue polypeptide: Small ribosomal subunit protein bS16 (146 aa).

A compositionally biased stretch (basic and acidic residues) spans 84-102; the sequence is SHLEAQKAAVERLGRRKDY. A disordered region spans residues 84-146; the sequence is SHLEAQKAAV…DAPAAEATTE (63 aa). Residues 110 to 119 show a composition bias toward low complexity; that stretch reads APKAAPVAEA. The span at 120 to 130 shows a compositional bias: acidic residues; that stretch reads PAEEAPAEEPA. Residues 131-146 show a composition bias toward low complexity; that stretch reads AEASTDDAPAAEATTE.

The protein belongs to the bacterial ribosomal protein bS16 family.

The sequence is that of Small ribosomal subunit protein bS16 from Rhodopirellula baltica (strain DSM 10527 / NCIMB 13988 / SH1).